We begin with the raw amino-acid sequence, 804 residues long: Probable basic-leucine zipper transcription factor C (804 aa).

2 disordered regions span residues 86-148 and 275-371; these read FISP…NDIN and YGNV…PKKR. Low complexity predominate over residues 90-145; that stretch reads NNNNNNNNNNNNNNNNNNNNNNNNNNNNNNNNNNNNNNNNNNNNNNNNNNNNNNNN. Polar residues predominate over residues 275 to 291; sequence YGNVSDNSSPETNFSYA. The span at 292–334 shows a compositional bias: low complexity; sequence SPSSPSSTQSQSSPYEQQPLSPNPTISLSSSISVTATTTTRPN. The segment covering 335–356 has biased composition (basic and acidic residues); sequence ATEKTKESSLKSKSKSNEKDKE. The region spanning 415-478 is the bZIP domain; that stretch reads ALNYQFRKIK…DQYKLQEKQK (64 aa). The tract at residues 421–436 is basic motif; that stretch reads RKIKNRESARRSRERK. The leucine-zipper stretch occupies residues 443–450; that stretch reads LEAKIAEI. The disordered stretch occupies residues 670–693; sequence KNCNNNNENNNNNDNNKNSDDEKG. Residues 672-685 show a composition bias toward low complexity; it reads CNNNNENNNNNDNN.

The protein belongs to the bZIP family.

Its subcellular location is the nucleus. Its function is as follows. Probable transcriptional regulator. The protein is Probable basic-leucine zipper transcription factor C (bzpC) of Dictyostelium discoideum (Social amoeba).